Reading from the N-terminus, the 935-residue chain is uncharacterized protein (935 aa).

9 disordered regions span residues 1 to 32 (MDIGLITNKEDDEENDLSIKSPYSTTKNQNNN), 74 to 228 (NNNN…YNNG), 265 to 287 (NNENKKKNNDNENNNYPNFNNNN), 342 to 376 (NQQKHQKKIQHQENSNFEQLEKPEQLSHNSESSKT), 394 to 414 (SPTQQQQQQQQQQQQQQQQQY), 466 to 491 (KNINNNNSNNNNNNNNNNNNNNNNNI), 516 to 559 (PHQQ…TSTI), 727 to 755 (SPSSSTSSETTTSTSTTTNNTSTTTISPS), and 778 to 799 (GGGSSGGGGSGGGVNNNNNVQN). The span at 74–227 (NNNNNTTNNN…NNNDDNIYNN (154 aa)) shows a compositional bias: low complexity. Positions 262–331 (KKNNNENKKK…NNINNNNNKI (70 aa)) form a coiled coil. Residues 265–274 (NNENKKKNND) are compositionally biased toward basic and acidic residues. The segment covering 275–287 (NENNNYPNFNNNN) has biased composition (low complexity). Residues 367–376 (LSHNSESSKT) show a composition bias toward polar residues. Residues 397–414 (QQQQQQQQQQQQQQQQQY) show a composition bias toward low complexity. Over residues 522–559 (SSPTSSSTSTSSTTSSSSSSSSSSSSSSSSSTSSTSTI) the composition is skewed to low complexity. Over residues 778–791 (GGGSSGGGGSGGGV) the composition is skewed to gly residues.

This is an uncharacterized protein from Dictyostelium discoideum (Social amoeba).